We begin with the raw amino-acid sequence, 230 residues long: Ion-translocating oxidoreductase complex subunit E (230 aa).

Transmembrane regions (helical) follow at residues 18-38 (ALVQ…ITNA), 39-59 (LGLG…VSLI), 69-89 (IPVF…LMNA), 93-113 (GLYL…IIIG), 124-144 (VLPA…VLVV), and 182-202 (SFLL…LIAL).

The protein belongs to the NqrDE/RnfAE family. As to quaternary structure, the complex is composed of six subunits: RnfA, RnfB, RnfC, RnfD, RnfE and RnfG.

The protein resides in the cell inner membrane. In terms of biological role, part of a membrane-bound complex that couples electron transfer with translocation of ions across the membrane. The sequence is that of Ion-translocating oxidoreductase complex subunit E from Vibrio parahaemolyticus serotype O3:K6 (strain RIMD 2210633).